The following is a 171-amino-acid chain: Phosphinothricin N-acetyltransferase (171 aa).

The N-acetyltransferase domain occupies 7 to 171 (VQVRPGVEED…WDVAWYERPL (165 aa)). Acetyl-CoA-binding positions include 94–96 (VYV), 102–107 (GRGIGS), and asparagine 133.

Belongs to the acetyltransferase family. PAT/BAR subfamily.

The enzyme catalyses phosphinothricin + acetyl-CoA = N-acetylphosphinothricin + CoA + H(+). Its function is as follows. Inactivates phosphinothricin (PPT) by transfer of an acetyl group from acetyl CoA. The physiological substrate could be a structurally related compound. The polypeptide is Phosphinothricin N-acetyltransferase (Streptomyces coelicolor (strain ATCC BAA-471 / A3(2) / M145)).